The chain runs to 136 residues: Large ribosomal subunit protein uL16 (136 aa).

It belongs to the universal ribosomal protein uL16 family. As to quaternary structure, part of the 50S ribosomal subunit.

In terms of biological role, binds 23S rRNA and is also seen to make contacts with the A and possibly P site tRNAs. The chain is Large ribosomal subunit protein uL16 from Citrobacter koseri (strain ATCC BAA-895 / CDC 4225-83 / SGSC4696).